The sequence spans 2080 residues: Fatty acid synthase beta subunit TOXC (2080 aa).

The Starter acyltransferase (SAT) domain maps to G170–K397. Catalysis depends on S276, which acts as the For acetyltransferase activity. The tract at residues S585–D830 is enoyl reductase (ER) domain. The dehydratase (DH) domain stretch occupies residues G1155 to L1644. One can recognise a MaoC-like domain in the interval S1544–A1662. Residues T1682–S2046 enclose the Malonyl-CoA:ACP transacylase (MAT) domain. The interval Y1683 to S2046 is malonyl/palmitoyl transferase (MT/PT) domain. Catalysis depends on S1828, which acts as the For malonyltransferase activity.

This sequence belongs to the fungal fatty acid synthetase subunit beta family.

It catalyses the reaction acetyl-CoA + n malonyl-CoA + 2n NADPH + 4n H(+) = a long-chain-acyl-CoA + n CoA + n CO2 + 2n NADP(+).. The enzyme catalyses holo-[ACP] + acetyl-CoA = acetyl-[ACP] + CoA. The catalysed reaction is holo-[ACP] + malonyl-CoA = malonyl-[ACP] + CoA. It carries out the reaction a (3R)-hydroxyacyl-[ACP] = a (2E)-enoyl-[ACP] + H2O. It catalyses the reaction a 2,3-saturated acyl-[ACP] + NAD(+) = a (2E)-enoyl-[ACP] + NADH + H(+). The enzyme catalyses (9Z)-octadecenoyl-[ACP] + H2O = (9Z)-octadecenoate + holo-[ACP] + H(+). Its pathway is mycotoxin biosynthesis; HC-toxin biosynthesis. Functionally, fatty acid synthase beta subunit, part of the diffuse TOX2 gene cluster that mediates the biosynthesis of the HC-toxin, cyclic tetrapeptide of structure cyclo(D-Pro-L-Ala-D-Ala-L-Aeo), where Aeo stands for 2-amino-9,10-epoxi-8-oxodecanoic acid. HC-toxin is a determinant of specificity and virulence in the interaction between the producing fungus and its host, maize. TOXC contribute to the synthesis of the decanoic backbone of 2-amino-9,10-epoxi-8-oxodecanoic acid, an essential precursor for the production of the major forms of HC-toxin by the non-ribosomal peptide synthetase HTS1. In Cochliobolus carbonum (Maize leaf spot fungus), this protein is Fatty acid synthase beta subunit TOXC.